Here is a 158-residue protein sequence, read N- to C-terminus: Eukaryotic translation initiation factor 5A (158 aa).

Lys-51 is modified (hypusine).

It belongs to the eIF-5A family. Lys-51 undergoes hypusination, a unique post-translational modification that consists in the addition of a butylamino group from spermidine to lysine side chain, leading to the formation of the unusual amino acid hypusine. eIF-5As are the only known proteins to undergo this modification, which is essential for their function.

Its subcellular location is the cytoplasm. In terms of biological role, translation factor that promotes translation elongation and termination, particularly upon ribosome stalling at specific amino acid sequence contexts. Binds between the exit (E) and peptidyl (P) site of the ribosome and promotes rescue of stalled ribosome: specifically required for efficient translation of polyproline-containing peptides as well as other motifs that stall the ribosome. Acts as a ribosome quality control (RQC) cofactor by joining the RQC complex to facilitate peptidyl transfer during CAT tailing step. In Candida albicans (strain SC5314 / ATCC MYA-2876) (Yeast), this protein is Eukaryotic translation initiation factor 5A (ANB1).